Here is a 678-residue protein sequence, read N- to C-terminus: Putative cyclic nucleotide-gated ion channel 15 (678 aa).

The Cytoplasmic portion of the chain corresponds to 1–81 (MGYGNSRSVR…RGQTIRRWNK (81 aa)). The chain crosses the membrane as a helical span at residues 82 to 102 (IFLIACLVSLFVDPLFFFLPV). Over 103–115 (MRNEACITIGVRL) the chain is Extracellular. The chain crosses the membrane as a helical span at residues 116–136 (EVVLTLIRSLADAFYIAQILI). Topologically, residues 137 to 170 (RFRTAYIAPPSRVFGRGELVIDSRKIAWRYLHKS) are cytoplasmic. Residues 171–191 (FWIHLVAALPLPQVLIWIIIP) traverse the membrane as a helical segment. Over 192–203 (NLRGSPMTNTKN) the chain is Extracellular. Residues 204 to 224 (VLRFIIIFQYVPRMFLIFPLS) form a helical membrane-spanning segment. Residues 225 to 245 (RQIIKATGVVTETAWAGAAYN) are Cytoplasmic-facing. A helical transmembrane segment spans residues 246 to 266 (LMLYMLASHVLGACWYLLAVE). At 267–364 (RQEACWRHAC…GQNLATSTYA (98 aa)) the chain is on the extracellular side. A helical membrane pass occupies residues 365–385 (GEILFAIIIATLGLVLFALLI). At 386-678 (GNMQTYLQST…KPVEPDFSSE (293 aa)) the chain is on the cytoplasmic side. Residues 471-595 (LFDQ…TKQL) and glutamate 542 contribute to the a nucleoside 3',5'-cyclic phosphate site. The interval 587-602 (FRRLHTKQLRHKFRFY) is calmodulin-binding. Residues 607-638 (RTWAACFIQAAWRRHRKRKYKTELRAKEEFHY) form the IQ domain. Positions 656–668 (RSGSDSGMMSSIQ) are enriched in polar residues. A disordered region spans residues 656–678 (RSGSDSGMMSSIQKPVEPDFSSE).

It belongs to the cyclic nucleotide-gated cation channel (TC 1.A.1.5) family. Homotetramer or heterotetramer.

Its subcellular location is the cell membrane. Functionally, putative cyclic nucleotide-gated ion channel. The chain is Putative cyclic nucleotide-gated ion channel 15 (CNGC15) from Arabidopsis thaliana (Mouse-ear cress).